A 120-amino-acid chain; its full sequence is Immunoglobulin kappa variable 2-30 (120 aa).

Residues 1–20 (MRLPAQLLGLLMLWVPGSSG) form the signal peptide. Positions 21 to 43 (DVVMTQSPLSLPVTLGQPASISC) are framework-1. The Ig-like domain maps to 21–120 (DVVMTQSPLS…YYCMQGTHWP (100 aa)). Cysteines 43 and 113 form a disulfide. A complementarity-determining-1 region spans residues 44–59 (RSSQSLVYSDGNTYLN). A framework-2 region spans residues 60 to 74 (WFQQRPGQSPRRLIY). The complementarity-determining-2 stretch occupies residues 75-81 (KVSNRDS). Positions 82–113 (GVPDRFSGSGSGTDFTLKISRVEAEDVGVYYC) are framework-3. The tract at residues 114–120 (MQGTHWP) is complementarity-determining-3.

As to quaternary structure, immunoglobulins are composed of two identical heavy chains and two identical light chains; disulfide-linked.

Its subcellular location is the secreted. It is found in the cell membrane. V region of the variable domain of immunoglobulin light chains that participates in the antigen recognition. Immunoglobulins, also known as antibodies, are membrane-bound or secreted glycoproteins produced by B lymphocytes. In the recognition phase of humoral immunity, the membrane-bound immunoglobulins serve as receptors which, upon binding of a specific antigen, trigger the clonal expansion and differentiation of B lymphocytes into immunoglobulins-secreting plasma cells. Secreted immunoglobulins mediate the effector phase of humoral immunity, which results in the elimination of bound antigens. The antigen binding site is formed by the variable domain of one heavy chain, together with that of its associated light chain. Thus, each immunoglobulin has two antigen binding sites with remarkable affinity for a particular antigen. The variable domains are assembled by a process called V-(D)-J rearrangement and can then be subjected to somatic hypermutations which, after exposure to antigen and selection, allow affinity maturation for a particular antigen. The chain is Immunoglobulin kappa variable 2-30 from Homo sapiens (Human).